The chain runs to 453 residues: Phenolic glucoside malonyltransferase 1 (453 aa).

His-165 (proton acceptor) is an active-site residue. Positions 165-169 (HVAGD) match the HXXXD motif motif. Residues Lys-254, His-266, and 268 to 269 (TS) each bind malonyl-CoA. Residue Asp-394 is the Proton acceptor of the active site. Residues 394–398 (DFGWG) carry the DFGWG motif motif.

It belongs to the plant acyltransferase family. Phenolic glucoside malonyltransferase subfamily. Monomer. Highly expressed in flower. Also expressed in flower bud, stem, root and leaf.

It catalyses the reaction a flavonol 3-O-beta-D-glucoside + malonyl-CoA = a flavonol 3-O-(6-O-malonyl-beta-D-glucoside) + CoA. The enzyme catalyses a flavonol 7-O-beta-D-glucoside + malonyl-CoA = a flavonol 7-O-(6-O-malonyl-beta-D-glucoside) + CoA. Its function is as follows. Malonyltransferase with broad substrate specificity acting on phenolic glucosides including xenobiotic naphthols. Has activity against flavonoid 7-O-glucosides, flavonoid 3-O-glucosides and naphthol glucosides, and to a lesser extent against coumarin glucosides in vitro. Prefers malonyl-CoA as an acyl donor, but also active with succinyl-CoA and methylmalonyl-CoA, but not with acetyl-CoA. This is Phenolic glucoside malonyltransferase 1 from Nicotiana tabacum (Common tobacco).